We begin with the raw amino-acid sequence, 143 residues long: Cofilin (143 aa).

Position 4 is a phosphoserine (serine 4). The 133-residue stretch at 5-137 (GVAVADESLT…SYDSVLERVS (133 aa)) folds into the ADF-H domain.

The protein belongs to the actin-binding proteins ADF family. In terms of assembly, interacts with actin and AIP1 in a ternary complex. The N-terminus is blocked.

It localises to the cytoplasm. The protein resides in the cytoskeleton. Its subcellular location is the nucleus matrix. In terms of biological role, controls reversibly actin polymerization and depolymerization in a pH-sensitive manner. It has the ability to bind G- and F-actin in a 1:1 ratio of cofilin to actin. Binding to F-actin is regulated by tropomyosin. It is the major component of intranuclear and cytoplasmic actin rods. Required for accumulation of actin at the cell division site via depolymerizing actin at the cell ends. In association with myosin II has a role in the assembly of the contractile ring via severing actin filaments. Involved in the maintenance of the contractile ring once formed. In association with profilin and capping protein, has a role in the mitotic reorganization of the actin cytoskeleton. In effect, yeast cofilin increases the rate of actin polymerization by making new ends available for actin subunit addition. Such a protein complex is important for the polarized growth of yeast cells. The chain is Cofilin (COF1) from Saccharomyces cerevisiae (strain ATCC 204508 / S288c) (Baker's yeast).